Reading from the N-terminus, the 188-residue chain is D-glycero-beta-D-manno-heptose-1,7-bisphosphate 7-phosphatase (188 aa).

Residues cysteine 92, histidine 94, cysteine 107, and cysteine 109 each coordinate Zn(2+).

This sequence belongs to the GmhB family.

It is found in the cytoplasm. The catalysed reaction is D-glycero-beta-D-manno-heptose 1,7-bisphosphate + H2O = D-glycero-beta-D-manno-heptose 1-phosphate + phosphate. It functions in the pathway nucleotide-sugar biosynthesis; ADP-L-glycero-beta-D-manno-heptose biosynthesis; ADP-L-glycero-beta-D-manno-heptose from D-glycero-beta-D-manno-heptose 7-phosphate: step 2/4. Its pathway is bacterial outer membrane biogenesis; LPS core biosynthesis. Converts the D-glycero-beta-D-manno-heptose 1,7-bisphosphate intermediate into D-glycero-beta-D-manno-heptose 1-phosphate by removing the phosphate group at the C-7 position. This chain is D-glycero-beta-D-manno-heptose-1,7-bisphosphate 7-phosphatase (gmhB1), found in Photorhabdus laumondii subsp. laumondii (strain DSM 15139 / CIP 105565 / TT01) (Photorhabdus luminescens subsp. laumondii).